The primary structure comprises 132 residues: Ribosome-binding factor A (132 aa).

Belongs to the RbfA family. Monomer. Binds 30S ribosomal subunits, but not 50S ribosomal subunits or 70S ribosomes.

The protein resides in the cytoplasm. Its function is as follows. One of several proteins that assist in the late maturation steps of the functional core of the 30S ribosomal subunit. Associates with free 30S ribosomal subunits (but not with 30S subunits that are part of 70S ribosomes or polysomes). Required for efficient processing of 16S rRNA. May interact with the 5'-terminal helix region of 16S rRNA. This is Ribosome-binding factor A from Burkholderia multivorans (strain ATCC 17616 / 249).